Here is a 297-residue protein sequence, read N- to C-terminus: Formamidopyrimidine-DNA glycosylase (297 aa).

Proline 2 functions as the Schiff-base intermediate with DNA in the catalytic mechanism. The active-site Proton donor is glutamate 3. Lysine 58 acts as the Proton donor; for beta-elimination activity in catalysis. DNA-binding residues include histidine 104, arginine 127, and lysine 170. The FPG-type zinc finger occupies serine 261–arginine 297. Arginine 287 (proton donor; for delta-elimination activity) is an active-site residue.

Belongs to the FPG family. Monomer. Requires Zn(2+) as cofactor.

It catalyses the reaction Hydrolysis of DNA containing ring-opened 7-methylguanine residues, releasing 2,6-diamino-4-hydroxy-5-(N-methyl)formamidopyrimidine.. The catalysed reaction is 2'-deoxyribonucleotide-(2'-deoxyribose 5'-phosphate)-2'-deoxyribonucleotide-DNA = a 3'-end 2'-deoxyribonucleotide-(2,3-dehydro-2,3-deoxyribose 5'-phosphate)-DNA + a 5'-end 5'-phospho-2'-deoxyribonucleoside-DNA + H(+). Involved in base excision repair of DNA damaged by oxidation or by mutagenic agents. Acts as a DNA glycosylase that recognizes and removes damaged bases. Has a preference for oxidized purines, such as 7,8-dihydro-8-oxoguanine (8-oxoG). Has AP (apurinic/apyrimidinic) lyase activity and introduces nicks in the DNA strand. Cleaves the DNA backbone by beta-delta elimination to generate a single-strand break at the site of the removed base with both 3'- and 5'-phosphates. This Chelativorans sp. (strain BNC1) protein is Formamidopyrimidine-DNA glycosylase.